Consider the following 417-residue polypeptide: UDP-N-acetylglucosamine 1-carboxyvinyltransferase (417 aa).

Lysine 22–asparagine 23 provides a ligand contact to phosphoenolpyruvate. Arginine 93 contributes to the UDP-N-acetyl-alpha-D-glucosamine binding site. Cysteine 117 acts as the Proton donor in catalysis. Residue cysteine 117 is modified to 2-(S-cysteinyl)pyruvic acid O-phosphothioketal. UDP-N-acetyl-alpha-D-glucosamine contacts are provided by residues arginine 122–glutamine 126, aspartate 304, and isoleucine 326.

This sequence belongs to the EPSP synthase family. MurA subfamily.

The protein localises to the cytoplasm. It catalyses the reaction phosphoenolpyruvate + UDP-N-acetyl-alpha-D-glucosamine = UDP-N-acetyl-3-O-(1-carboxyvinyl)-alpha-D-glucosamine + phosphate. Its pathway is cell wall biogenesis; peptidoglycan biosynthesis. In terms of biological role, cell wall formation. Adds enolpyruvyl to UDP-N-acetylglucosamine. This chain is UDP-N-acetylglucosamine 1-carboxyvinyltransferase, found in Laribacter hongkongensis (strain HLHK9).